The chain runs to 432 residues: Enolase (432 aa).

Glutamine 167 contributes to the (2R)-2-phosphoglycerate binding site. The active-site Proton donor is glutamate 209. Residues aspartate 246, glutamate 290, and aspartate 317 each contribute to the Mg(2+) site. (2R)-2-phosphoglycerate is bound by residues lysine 342, arginine 371, serine 372, and lysine 393. The active-site Proton acceptor is lysine 342.

This sequence belongs to the enolase family. As to quaternary structure, component of the RNA degradosome, a multiprotein complex involved in RNA processing and mRNA degradation. Mg(2+) serves as cofactor.

It is found in the cytoplasm. It localises to the secreted. The protein resides in the cell surface. It carries out the reaction (2R)-2-phosphoglycerate = phosphoenolpyruvate + H2O. The protein operates within carbohydrate degradation; glycolysis; pyruvate from D-glyceraldehyde 3-phosphate: step 4/5. Catalyzes the reversible conversion of 2-phosphoglycerate (2-PG) into phosphoenolpyruvate (PEP). It is essential for the degradation of carbohydrates via glycolysis. This Salmonella dublin (strain CT_02021853) protein is Enolase.